A 234-amino-acid polypeptide reads, in one-letter code: Protein spitz (234 aa).

A signal peptide spans 1–28; the sequence is MHSTMSVQHGLVALVLIGCLAHPWHVEA. Residues 29-143 are Lumenal-facing; it reads CSSRTVPKPR…RPRPMLEKAS (115 aa). A disordered region spans residues 33-71; sequence TVPKPRSSISSSMSGTALPPTQAPVTSSTTMRTTTTTTP. Positions 56–71 are enriched in low complexity; the sequence is PVTSSTTMRTTTTTTP. The N-linked (GlcNAc...) asparagine glycan is linked to Asn-74. Residues 78–122 form the EGF-like domain; it reads PTYKCPETFDAWYCLNDAHCFAVKIADLPVYSCECAIGFMGQRCE. 3 disulfides stabilise this stretch: Cys-82/Cys-97, Cys-91/Cys-110, and Cys-112/Cys-121. Residues 144–164 traverse the membrane as a helical segment; that stretch reads IASGAMCALVFMLFVCLAFYL. Residues 165 to 234 are Cytoplasmic-facing; sequence RFEQRAAKKA…SFAIRRSNKL (70 aa).

As to quaternary structure, interacts with Star via the lumenal domain. Post-translationally, proteolytic processing by Rhomboid occurs in the Golgi. Cleavage takes place within the transmembrane domain close to residue 144 and the active growth factor is released. N-glycosylated and O-glycosylated. As to expression, expressed throughout the embryo.

Its subcellular location is the cell membrane. The protein resides in the endoplasmic reticulum membrane. The protein localises to the golgi apparatus membrane. Functionally, ligand for the EGF receptor (Gurken). Involved in a number of unrelated developmental choices, for example, dorsal-ventral axis formation, glial migration, sensory organ determination, and muscle development. It is required for photoreceptor determination. The protein is Protein spitz (spi) of Drosophila melanogaster (Fruit fly).